A 281-amino-acid polypeptide reads, in one-letter code: 4-diphosphocytidyl-2-C-methyl-D-erythritol kinase (281 aa).

Residue lysine 15 is part of the active site. 98 to 108 serves as a coordination point for ATP; it reads PTGAGLGGGSS. Residue aspartate 140 is part of the active site.

It belongs to the GHMP kinase family. IspE subfamily.

The enzyme catalyses 4-CDP-2-C-methyl-D-erythritol + ATP = 4-CDP-2-C-methyl-D-erythritol 2-phosphate + ADP + H(+). It functions in the pathway isoprenoid biosynthesis; isopentenyl diphosphate biosynthesis via DXP pathway; isopentenyl diphosphate from 1-deoxy-D-xylulose 5-phosphate: step 3/6. In terms of biological role, catalyzes the phosphorylation of the position 2 hydroxy group of 4-diphosphocytidyl-2C-methyl-D-erythritol. In Neisseria meningitidis serogroup B (strain ATCC BAA-335 / MC58), this protein is 4-diphosphocytidyl-2-C-methyl-D-erythritol kinase.